Reading from the N-terminus, the 863-residue chain is Neuroligin-1 (863 aa).

Residues 1–45 (MALPRCTWPNYVWRAVMACLVHRGLGAPLTLCMLGCLLQAGHVLS) form the signal peptide. At 46–717 (QKLDDVDPLV…DQRDYSTELS (672 aa)) the chain is on the extracellular side. Residue N109 is glycosylated (N-linked (GlcNAc...) (complex) asparagine). A disulfide bridge connects residues C117 and C153. Residues 183 to 212 (KGGPLTKKQTDDLGDNDGAEDEDIRDSGGP) are disordered. Residues 194–206 (DLGDNDGAEDEDI) show a composition bias toward acidic residues. N-linked (GlcNAc...) (complex) asparagine glycans are attached at residues N323 and N363. Intrachain disulfides connect C362/C373 and C532/C566. N567 carries N-linked (GlcNAc...) asparagine glycosylation. Residues 670 to 708 (PSTDITFRPTRKNSVPVTSAFPTAKQDDPKQQPSPFSVD) form a disordered region. The span at 681–690 (KNSVPVTSAF) shows a compositional bias: polar residues. Residues S703 and S706 are each glycosylated (O-linked (GalNAc...) serine). A helical membrane pass occupies residues 718–738 (VTIAVGASLLFLNILAFAALY). Over 739-863 (YKKDKRRHDV…HPHSHSTTRV (125 aa)) the chain is Cytoplasmic. Residues 842–863 (GGQNNTLPHPHPHPHSHSTTRV) are disordered. The span at 851–863 (PHPHPHSHSTTRV) shows a compositional bias: basic residues.

The protein belongs to the type-B carboxylesterase/lipase family. In terms of assembly, interacts with neurexins NRXN1, NRXN2 and NRXN3. Interaction with neurexins is mediated by heparan sulfate glycan modification on neurexin. Interacts with NLGN3. Interacts with AIP1 and PDZRN3. Interacts (via its C-terminus) with DLG4/PSD-95 (via PDZ domain 3). Interacts with GOPC. As to expression, expressed in the blood vessel walls (at protein level). Highly expressed in brain through prenatal stages, and at lower levels in pancreas islet beta cells.

It is found in the cell membrane. Its subcellular location is the postsynaptic density. The protein localises to the synaptic cleft. It localises to the synaptic cell membrane. Functionally, cell surface protein involved in cell-cell-interactions via its interactions with neurexin family members. Plays a role in synapse function and synaptic signal transmission, and probably mediates its effects by recruiting and clustering other synaptic proteins. May promote the initial formation of synapses, but is not essential for this. In vitro, triggers the de novo formation of presynaptic structures. May be involved in specification of excitatory synapses. Required to maintain wakefulness quality and normal synchrony of cerebral cortex activity during wakefulness and sleep. The protein is involved in nervous system development. This is Neuroligin-1 (NLGN1) from Homo sapiens (Human).